The primary structure comprises 138 residues: Transcriptional regulator MraZ (138 aa).

SpoVT-AbrB domains follow at residues 3–45 (EFQH…PLAE) and 74–117 (ATEC…AAER).

This sequence belongs to the MraZ family. Forms oligomers.

It localises to the cytoplasm. The protein resides in the nucleoid. The sequence is that of Transcriptional regulator MraZ from Symbiobacterium thermophilum (strain DSM 24528 / JCM 14929 / IAM 14863 / T).